The sequence spans 671 residues: Bifunctional acetylxylan esterase/xylanase XynS20E (671 aa).

Residues 1–19 form the signal peptide; it reads MRLGVALSTIAVLLTATSA. Positions 54–279 are acetylxylan esterase; sequence QGAGRDIHVY…IQDIWDFVSQ (226 aa). The active-site Charge relay system is Ser-152. A glycan (N-linked (GlcNAc...) asparagine) is linked at Asn-238. The tract at residues 285–328 is disordered; the sequence is PVSASGNGGGNTTPTNPSTGGNGNGNGGGNTTPTNPSTGGNGNG. Over residues 304–314 the composition is skewed to gly residues; sequence GGNGNGNGGGN. 2 consecutive CBM10 domains span residues 335–374 and 383–422; these read KCSS…CGCG and TCSA…CGCG. N-linked (GlcNAc...) asparagine glycosylation is present at Asn-339. 2 N-linked (GlcNAc...) asparagine glycosylation sites follow: Asn-445 and Asn-483. Residues 461-661 form the GH11 domain; the sequence is TVTSNKVGDI…NNGGTSGTAD (201 aa). Glu-555 serves as the catalytic Nucleophile. Glu-648 serves as the catalytic Proton donor.

This sequence in the N-terminal section; belongs to the axeA family. In the C-terminal section; belongs to the glycosyl hydrolase 11 (cellulase G) family.

The protein resides in the secreted. It catalyses the reaction Deacetylation of xylans and xylo-oligosaccharides.. It carries out the reaction Endohydrolysis of (1-&gt;4)-beta-D-xylosidic linkages in xylans.. It participates in glycan degradation; xylan degradation. Its function is as follows. Bifunctional acetylxylan esterase/xylanase involved in the hydrolysis of xylan, a major structural heterogeneous polysaccharide found in plant biomass representing the second most abundant polysaccharide in the biosphere, after cellulose. Degrades xylan from acetylxylan, beechwood, birchwood, and oat spelt, and releases acetate from 4-methylumbelliferyl acetate and beta-D-xylose tetraacetate. No activity is observed against carboxy methyl cellulose, beta-glucan, p-nitrophenol acetate, p-nitrophenol laurate, p-nitrophenol myristate, p-nitrophenol, palmitate, or beta-naphthol acetate. The protein is Bifunctional acetylxylan esterase/xylanase XynS20E (xynS20E) of Neocallimastix patriciarum (Rumen fungus).